Consider the following 293-residue polypeptide: Elongation factor Ts (293 aa).

The tract at residues 80-83 is involved in Mg(2+) ion dislocation from EF-Tu; sequence TDFV.

It belongs to the EF-Ts family.

It localises to the cytoplasm. Functionally, associates with the EF-Tu.GDP complex and induces the exchange of GDP to GTP. It remains bound to the aminoacyl-tRNA.EF-Tu.GTP complex up to the GTP hydrolysis stage on the ribosome. This Burkholderia multivorans (strain ATCC 17616 / 249) protein is Elongation factor Ts.